A 351-amino-acid polypeptide reads, in one-letter code: Ribosomal RNA small subunit methyltransferase H (351 aa).

S-adenosyl-L-methionine contacts are provided by residues 48-50, aspartate 67, phenylalanine 94, aspartate 115, and glutamine 122; that span reads GGY. Positions 274 to 351 are disordered; it reads AAQASRHVPG…PAPQGRGPRR (78 aa).

Belongs to the methyltransferase superfamily. RsmH family.

The protein localises to the cytoplasm. It carries out the reaction cytidine(1402) in 16S rRNA + S-adenosyl-L-methionine = N(4)-methylcytidine(1402) in 16S rRNA + S-adenosyl-L-homocysteine + H(+). Specifically methylates the N4 position of cytidine in position 1402 (C1402) of 16S rRNA. This is Ribosomal RNA small subunit methyltransferase H from Methylorubrum extorquens (strain ATCC 14718 / DSM 1338 / JCM 2805 / NCIMB 9133 / AM1) (Methylobacterium extorquens).